A 412-amino-acid polypeptide reads, in one-letter code: Branched-chain alpha-ketoacid dehydrogenase kinase (412 aa).

Residues 1-30 constitute a mitochondrion transit peptide; sequence MILTSVLGSGPRSGSSLWPLLGSSLSLRVR. The residue at position 31 (Ser-31) is a Phosphoserine. The region spanning 159-404 is the Histidine kinase domain; sequence LDDHKDVVTL…DVYLRLRHID (246 aa). N6-acetyllysine occurs at positions 192 and 233. Residues Asn-279 and Asp-315 each coordinate ATP. A Mg(2+)-binding site is contributed by Asn-279. The K(+) site is built by Val-328, Asp-330, and Phe-333. 2 residues coordinate ATP: Thr-334 and Thr-335. Phosphoserine is present on residues Ser-356 and Ser-360. 3 residues coordinate ATP: His-364, Gly-367, and Leu-370. Gly-367 contributes to the K(+) binding site.

The protein belongs to the PDK/BCKDK protein kinase family. As to quaternary structure, homodimer. Homotetramer. Dimerizes through interaction of two opposing nucleotide-binding domains. Interacts with E2 component of the branched-chain alpha-ketoacid dehydrogenase (BCKDH) complex. Competes with BCKDK for binding to the E2 component; this interaction is modulated by branched-chain alpha-keto acids. At steady state, BCKDH holoenzyme contains BCKDK and BCKDHA is phosphorylated. In response to high levels of branched-chain alpha-keto acids, the inhibitory BCKDK is replaced by activating PPM1K leading to BCKDHA dephosphorylation and BCAA degradation. Post-translationally, autophosphorylated. Expressed in heart and liver.

The protein localises to the mitochondrion matrix. It is found in the mitochondrion. It catalyses the reaction L-seryl-[3-methyl-2-oxobutanoate dehydrogenase] + ATP = O-phospho-L-seryl-[3-methyl-2-oxobutanoate dehydrogenase] + ADP + H(+). It carries out the reaction L-seryl-[protein] + ATP = O-phospho-L-seryl-[protein] + ADP + H(+). The ATP-ase activity is up-regulated by potassium and rubidium ions but not by sodium ions. Up-regulated in the presence of apo- or lipoylated-DBT/E2b subunit of the BCKDH complex. In terms of biological role, serine/threonine-protein kinase component of macronutrients metabolism. Forms a functional kinase and phosphatase pair with PPM1K, serving as a metabolic regulatory node that coordinates branched-chain amino acids (BCAAs) with glucose and lipid metabolism via two distinct phosphoprotein targets: mitochondrial BCKDHA subunit of the branched-chain alpha-ketoacid dehydrogenase (BCKDH) complex and cytosolic ACLY, a lipogenic enzyme of Krebs cycle. Phosphorylates and inactivates mitochondrial BCKDH complex a multisubunit complex consisting of three multimeric components each involved in different steps of BCAA catabolism: E1 composed of BCKDHA and BCKDHB, E2 core composed of DBT monomers, and E3 composed of DLD monomers. Associates with the E2 component of BCKDH complex and phosphorylates BCKDHA on Ser-333, leading to conformational changes that interrupt substrate channeling between E1 and E2 and inactivates the BCKDH complex. phosphorylates ACLY on Ser-455 in response to changes in cellular carbohydrate abundance such as occurs during fasting to feeding metabolic transition. Refeeding stimulates MLXIPL/ChREBP transcription factor, leading to increased BCKDK to PPM1K expression ratio, phosphorylation and activation of ACLY that ultimately results in the generation of malonyl-CoA and oxaloacetate immediate substrates of de novo lipogenesis and glucogenesis, respectively. Recognizes phosphosites having SxxE/D canonical motif. The polypeptide is Branched-chain alpha-ketoacid dehydrogenase kinase (Bckdk) (Rattus norvegicus (Rat)).